A 351-amino-acid polypeptide reads, in one-letter code: tRNA (guanine(26)-N(2))-dimethyltransferase (351 aa).

Residues 4–350 (VLRREGAVQF…AGYGEVKRAL (347 aa)) enclose the Trm1 methyltransferase domain. S-adenosyl-L-methionine is bound by residues Arg-39, Arg-65, Asp-83, Asp-109, and Ala-110.

Belongs to the class I-like SAM-binding methyltransferase superfamily. Trm1 family.

It catalyses the reaction guanosine(26) in tRNA + 2 S-adenosyl-L-methionine = N(2)-dimethylguanosine(26) in tRNA + 2 S-adenosyl-L-homocysteine + 2 H(+). Its function is as follows. Dimethylates a single guanine residue at position 26 of a number of tRNAs using S-adenosyl-L-methionine as donor of the methyl groups. This is tRNA (guanine(26)-N(2))-dimethyltransferase from Pyrobaculum neutrophilum (strain DSM 2338 / JCM 9278 / NBRC 100436 / V24Sta) (Thermoproteus neutrophilus).